The sequence spans 43 residues: Potassium channel toxin gamma-KTx 4.12 (43 aa).

4 cysteine pairs are disulfide-bonded: cysteine 5-cysteine 23, cysteine 11-cysteine 34, cysteine 20-cysteine 39, and cysteine 24-cysteine 41.

Expressed by the venom gland.

Its subcellular location is the secreted. Its function is as follows. Reversibly blocks Kv11/ERG potassium channels. Is less toxic than ergtoxin (AC Q86QT3). The chain is Potassium channel toxin gamma-KTx 4.12 from Centruroides sculpturatus (Arizona bark scorpion).